A 370-amino-acid chain; its full sequence is Vasopressin V2 receptor (370 aa).

The disordered stretch occupies residues 1 to 28 (MLRATTSAVPRALSWPAAPGNGSEREPL). Topologically, residues 1-37 (MLRATTSAVPRALSWPAAPGNGSEREPLDDRDPLLAR) are extracellular. Asn-21 carries an N-linked (GlcNAc...) asparagine glycan. The helical transmembrane segment at 38 to 62 (VELALLSTVFVAVALSNGLVLGALV) threads the bilayer. The Cytoplasmic portion of the chain corresponds to 63-76 (RRGRRGRWAPMHVF). The chain crosses the membrane as a helical span at residues 77-97 (IGHLCLADLAVALFQVLPQLA). At 98 to 112 (WDATYRFRGPDALCR) the chain is on the extracellular side. A helical membrane pass occupies residues 113-134 (AVKYLQMVGMYASSYMILAMTL). Over 135–158 (DRHRAICRPMLAYRHGGGARWNRP) the chain is Cytoplasmic. Residues 159–179 (VLVAWAFSLLLSLPQLFIFAQ) form a helical membrane-spanning segment. At 180–199 (RDVGDGSGVLDCWASFAEPW) the chain is on the extracellular side. A helical membrane pass occupies residues 200–219 (GLRAYVTWIALMVFVAPALG). Residues 220–270 (IAACQVLIFREIHTSLVPGPAERAGGHRGGRRAGSPREGARVSAAMAKTAR) are Cytoplasmic-facing. A helical membrane pass occupies residues 271–292 (MTLVIVAVYVLCWAPFFLVQLW). The Extracellular portion of the chain corresponds to 293 to 307 (SVWDPKAPREGPPFV). Residues 308–327 (LLMLLASLNSCTNPWIYASF) traverse the membrane as a helical segment. Topologically, residues 328-370 (SSSISSELRSLLCCPRRRTPPSLRPQEESCATASSFSARDTSS) are cytoplasmic. Residues Cys-340 and Cys-341 are each lipidated (S-palmitoyl cysteine). Positions 347–370 (PPSLRPQEESCATASSFSARDTSS) are disordered. The segment covering 356-370 (SCATASSFSARDTSS) has biased composition (polar residues).

Belongs to the G-protein coupled receptor 1 family. Vasopressin/oxytocin receptor subfamily. As to quaternary structure, interacts with ARRDC4. Identified in a complex containing at least ARRDC4, V2R and HGS. Interacts with TMEM147.

The protein localises to the cell membrane. Functionally, receptor for arginine vasopressin. The activity of this receptor is mediated by G proteins which activate adenylate cyclase. Involved in renal water reabsorption. The sequence is that of Vasopressin V2 receptor (AVPR2) from Sus scrofa (Pig).